The primary structure comprises 120 residues: Large ribosomal subunit protein uL18 (120 aa).

Residues Met-1 to Glu-10 are compositionally biased toward basic and acidic residues. The disordered stretch occupies residues Met-1–Arg-26.

Belongs to the universal ribosomal protein uL18 family. As to quaternary structure, part of the 50S ribosomal subunit; part of the 5S rRNA/L5/L18/L25 subcomplex. Contacts the 5S and 23S rRNAs.

In terms of biological role, this is one of the proteins that bind and probably mediate the attachment of the 5S RNA into the large ribosomal subunit, where it forms part of the central protuberance. The sequence is that of Large ribosomal subunit protein uL18 from Nostoc sp. (strain PCC 7120 / SAG 25.82 / UTEX 2576).